A 323-amino-acid polypeptide reads, in one-letter code: MMNILLPLLGGFIITAAFMPALIRYFRARHEGQMIREEGPTWHEKKSGTPTMGGLLFIVAIAVMTLLTSWVLAPHHMLPTTWILIFILVLYGALGMWDDSIKLFHRQNEGLKAWQKMLGQIVGALILFWVYTHEQLPMALHVPGIGNWHMSGWYAVFVILWLVGFSNAVNLSDGLDGLVSGLASIAFAAYGIVAWQQAQINIAIFCFAVVGSLLGFLIFNHKPAKIFMGDTGSLALGGALAAVSILLHHELSLLWIGLIFVIETASVILQVASFKLTGKRIFLMSPIHHHFEMKGWSEWRIDLTFWGIGLVTALSGVWVILAK.

The next 9 helical transmembrane spans lie at 3 to 23, 52 to 72, 77 to 97, 121 to 141, 145 to 165, 175 to 195, 200 to 220, 226 to 248, and 301 to 321; these read NILL…PALI, MGGL…SWVL, MLPT…LGMW, IVGA…MALH, IGNW…LVGF, LDGL…IVAW, INIA…LIFN, IFMG…ILLH, and IDLT…WVIL.

This sequence belongs to the glycosyltransferase 4 family. MraY subfamily. Mg(2+) serves as cofactor.

The protein localises to the cell membrane. The enzyme catalyses UDP-N-acetyl-alpha-D-muramoyl-L-alanyl-gamma-D-glutamyl-L-lysyl-D-alanyl-D-alanine + di-trans,octa-cis-undecaprenyl phosphate = Mur2Ac(oyl-L-Ala-gamma-D-Glu-L-Lys-D-Ala-D-Ala)-di-trans,octa-cis-undecaprenyl diphosphate + UMP. It participates in cell wall biogenesis; peptidoglycan biosynthesis. Functionally, catalyzes the initial step of the lipid cycle reactions in the biosynthesis of the cell wall peptidoglycan: transfers peptidoglycan precursor phospho-MurNAc-pentapeptide from UDP-MurNAc-pentapeptide onto the lipid carrier undecaprenyl phosphate, yielding undecaprenyl-pyrophosphoryl-MurNAc-pentapeptide, known as lipid I. The polypeptide is Phospho-N-acetylmuramoyl-pentapeptide-transferase (Levilactobacillus brevis (strain ATCC 367 / BCRC 12310 / CIP 105137 / JCM 1170 / LMG 11437 / NCIMB 947 / NCTC 947) (Lactobacillus brevis)).